Reading from the N-terminus, the 421-residue chain is MTDTLNPLVAAQEKVRIACEKLGCDPAVYELLKEPQRVIEISIPVKMDDGTVKVFKGWRSAHSSAVGPSKGGVRFHPNVNMDEVKALSLWMTFKGGALGLPYGGGKGGICVDPAELSERELEQLSRGWVRGLYKYLGDRIDIPAPDVNTNGQIMSWFVDEYVKLNGERMDIGTFTGKPVAFGGSEGRNEATGFGVAVVVRESAKRFGIKMEDAKIAVQGFGNVGTFTVKNIERQGGKVCAIAEWDRNEGNYALYNENGIDFKELLAYKEANKTLIGFPGAERITDEEFWTKEYDIIVPAALENVITGERAKTINAKLVCEAANGPTTPEGDKVLTERGINLTPDILTNSGGVLVSYYEWVQNQYGYYWTEAEVEEKQEADMMKAIKGVFAVADEYNVTLREAVYMYAIKSIDVAMKLRGWY.

Residues Lys-70 and Lys-94 each contribute to the substrate site. Lys-106 (proton donor) is an active-site residue. Thr-191 and Asn-222 together coordinate NAD(+). Ser-355 contacts substrate.

Belongs to the Glu/Leu/Phe/Val dehydrogenases family. In terms of assembly, homohexamer.

It catalyses the reaction L-glutamate + NAD(+) + H2O = 2-oxoglutarate + NH4(+) + NADH + H(+). It functions in the pathway amino-acid degradation; L-glutamate degradation via hydroxyglutarate pathway; crotonoyl-CoA from L-glutamate: step 1/5. This Peptoniphilus asaccharolyticus (Peptostreptococcus asaccharolyticus) protein is NAD-specific glutamate dehydrogenase.